We begin with the raw amino-acid sequence, 424 residues long: Dehydrogenase FUM7 (424 aa).

The protein belongs to the iron-containing alcohol dehydrogenase family. Requires Fe cation as cofactor.

It participates in mycotoxin biosynthesis. Its function is as follows. Dehydrogenase; part of the gene cluster that mediates the biosynthesis of fumonisins B1 (FB1), B2 (FB2), B3 (FB3), and B4 (FB4), which are carcinogenic mycotoxins. Within the pathway, FUM7 is involved the addition of the tricarballylic moieties to the carbon backbone. FUM7 dehydrogenase removes the C-3 hydroxyl of citrate to form tricarballylic acid either before or after the CoA activation by the FUM10 acyl-CoA synthetase and FUM14 catalyzed esterification of CoA-activated tricarballylic acid to the C-14 and C-15 hydroxyls of the fumonisin backbone. The biosynthesis starts with the FUM1-catalyzed carbon chain assembly from one molecule of acetyl-CoA, eight molecules of malonyl-CoA, and two molecules of methionine (in S-adenosyl form). The C18 polyketide chain is released from the enzyme by a nucleophilic attack of a carbanion, which is derived from R-carbon of alanine by decarboxylation, on the carbonyl carbon of polyketide acyl chain. This step is catalyzed by the pyridoxal 5'-phosphate-dependent aminoacyl transferase FUM8. The resultant 3-keto intermediate is then stereospecifically reduced to a 3-hydroxyl product by reductase FUM13. Subsequent oxidations at C-10 by the cytochrome P450 monooxygenase FUM2, C-14 and C-15 by FUM6, FUM12 or FUM15, tricarballylic esterification of the hydroxyl groups on C-14 and C-15 by acyltransferase FUM14, and C-5 hydroxylation by 2-keto-glutarate-dependent dioxygenase FUM3 furnish the biosynthesis of fumonisins. The tricarballylic moieties are most likely derived from the citric acid cycle, and their addition to the carbon backbone may involve FUM7, FUM10, FUM11 and FUM14. The polypeptide is Dehydrogenase FUM7 (Gibberella moniliformis (strain M3125 / FGSC 7600) (Maize ear and stalk rot fungus)).